The following is a 67-amino-acid chain: Large ribosomal subunit protein uL29 (67 aa).

It belongs to the universal ribosomal protein uL29 family.

This chain is Large ribosomal subunit protein uL29, found in Moorella thermoacetica (strain ATCC 39073 / JCM 9320).